Reading from the N-terminus, the 141-residue chain is Hemoglobin subunit alpha (141 aa).

A Globin domain is found at 2–141 (AFTACEKQTI…ICQELSSRYR (140 aa)). His59 lines the O2 pocket. Residue His88 participates in heme b binding.

The protein belongs to the globin family. Heterotetramer of two alpha chains and two beta chains. Red blood cells.

In terms of biological role, involved in oxygen transport from gills to the various peripheral tissues. This Mustelus griseus (Spotless smooth-hound) protein is Hemoglobin subunit alpha (HBA).